Here is a 200-residue protein sequence, read N- to C-terminus: MLDVIELDFDYHDQPLLQQISFHLPAGGLLHLKGSNGAGKTTLLKLIAGLLNPEKGEILFERQSIKKDLCTYQKQLCFVGHRSGINPYLTIRENCLYDIHFSPGAVGITELCRLFSLEHLIDYPCGLLSSGQKRQVALLRLWMSKAKLWLLDEPLVALDELSLLTIITKIQEHRAKGGAVLLTSHQDLPLNKADYEEYHL.

An ABC transporter domain is found at 2–200 (LDVIELDFDY…NKADYEEYHL (199 aa)). Residue 34–41 (GSNGAGKT) coordinates ATP.

It belongs to the ABC transporter superfamily. CcmA exporter (TC 3.A.1.107) family. In terms of assembly, the complex is composed of two ATP-binding proteins (CcmA) and two transmembrane proteins (CcmB).

It is found in the cell inner membrane. The enzyme catalyses heme b(in) + ATP + H2O = heme b(out) + ADP + phosphate + H(+). Part of the ABC transporter complex CcmAB involved in the biogenesis of c-type cytochromes; once thought to export heme, this seems not to be the case, but its exact role is uncertain. Responsible for energy coupling to the transport system. In Legionella pneumophila (strain Lens), this protein is Cytochrome c biogenesis ATP-binding export protein CcmA.